We begin with the raw amino-acid sequence, 110 residues long: MTSYLWFLLAAVFEIAGCYAFWMWLRLDRSAWWIAPGLLSLVLFALILTRVEASFAGRAYAAYGGVYIVASLAWLALIEKTRPMLSDWLGAALCLAGAAIILFAPRLHTS.

A run of 4 helical transmembrane segments spans residues 5-25 (LWFL…WMWL), 31-51 (AWWI…LTRV), 59-79 (AYAA…ALIE), and 84-104 (MLSD…ILFA).

The protein belongs to the UPF0060 family.

It is found in the cell inner membrane. In Ectopseudomonas mendocina (strain ymp) (Pseudomonas mendocina), this protein is UPF0060 membrane protein Pmen_1247.